The sequence spans 192 residues: Glycerol-3-phosphate acyltransferase (192 aa).

A run of 5 helical transmembrane segments spans residues 3–23 (ALFL…EVIA), 51–71 (YGVL…LIAV), 80–100 (VLTF…FFGF), 112–132 (VVFA…LGIF), and 149–169 (AFLF…AIVI).

The protein belongs to the PlsY family. As to quaternary structure, probably interacts with PlsX.

The protein localises to the cell inner membrane. It carries out the reaction an acyl phosphate + sn-glycerol 3-phosphate = a 1-acyl-sn-glycero-3-phosphate + phosphate. Its pathway is lipid metabolism; phospholipid metabolism. In terms of biological role, catalyzes the transfer of an acyl group from acyl-phosphate (acyl-PO(4)) to glycerol-3-phosphate (G3P) to form lysophosphatidic acid (LPA). This enzyme utilizes acyl-phosphate as fatty acyl donor, but not acyl-CoA or acyl-ACP. The chain is Glycerol-3-phosphate acyltransferase from Aquifex aeolicus (strain VF5).